The sequence spans 454 residues: MLDKNTNLTHQSKIEFVNSNLRGIGFVNNTKIEVPYSLPGDVYNVTFFKKKRRKPSAKLELVSQTQRSFIPPCSAFTKCGGCCAQHISYQDQFRYKTSSLLESYKKDFEIVPTLYPAQKTFYYRNRMDFAVFPGPIVGQREAGSFRHIVDLETCLIQSKESNEELYRFRNLISKFPNLPYDRKSDSGFLKYFTLRKAKNTSELMTILTFVEEFKNTIEEKEFENVCLKSLKADHILFCFNRRKGEISATGEIKILKGMDSYKELVCGKEFRVPFDSFFQPNPEGFQPILDFIEKEIPDSFDHLVDLFCGSGFFSRIFAHKFLKITGIDSIESSLEIARKQMSLDFPKIDSSYLKVDLFSKNSSSKLKVLFSSSDKDVLIADPPRAGLGEFVLDALKDSKVSYFFYVSCNPTSQKSDLWKLKDFFQIQKILITDPYPQTPHLESVAFLKRKNFTT.

Residues Cys-73, Cys-79, Cys-82, and Cys-154 each contribute to the [4Fe-4S] cluster site. Positions 279, 307, 328, and 381 each coordinate S-adenosyl-L-methionine. Catalysis depends on Cys-408, which acts as the Nucleophile.

It belongs to the class I-like SAM-binding methyltransferase superfamily. RNA M5U methyltransferase family.

This is an uncharacterized protein from Leptospira interrogans serogroup Icterohaemorrhagiae serovar Lai (strain 56601).